Here is a 657-residue protein sequence, read N- to C-terminus: Forkhead box protein O3 (657 aa).

2 disordered regions span residues 1-71 and 216-320; these read MAEA…EGAA and SSWW…ELDD. Positions 142–236 form a DNA-binding region, fork-head; the sequence is WGNMSYADLI…KGGKAPRRRA (95 aa). Positions 246–257 are enriched in basic residues; sequence TKSRGRAAKKKA. Residues 268-283 show a composition bias toward polar residues; sequence DSPSQLSKWPGSPTSR. The span at 284–296 shows a compositional bias: basic and acidic residues; it reads SSDKLDTWTDFRS. The segment covering 297–307 has biased composition (polar residues); sequence RTNSNASTISG.

Dephosphorylation may promote translocation to the nucleus where the protein induces transcription of target genes and triggers apoptosis. As to expression, localized to the animal hemisphere during early cleavage stages. At the late neurula, localized in the anterior neural plate, neural crest cells and in the hatching gland. As development progresses, expression becomes less localized, being observed in a variety of organs and tissues including the head, branchial arches and somites by stage 32.

The protein resides in the cytoplasm. The protein localises to the cytosol. It is found in the nucleus. Functionally, transcriptional activator that recognizes and binds to the DNA sequence 5'-[AG]TAAA[TC]A-3' and regulates different processes, such as apoptosis and autophagy. Acts as a positive regulator of autophagy in skeletal muscle: in starved cells, enters the nucleus following dephosphorylation and binds the promoters of autophagy genes, thereby activating their expression, resulting in proteolysis of skeletal muscle proteins. Triggers apoptosis in the absence of survival factors, including neuronal cell death upon oxidative stress. In response to metabolic stress, translocates into the mitochondria where it promotes mtDNA transcription. Also acts as a key regulator of chondrogenic commitment of skeletal progenitor cells in response to lipid availability: when lipids levels are low, translocates to the nucleus and promotes expression of sox9, which induces chondrogenic commitment and suppresses fatty acid oxidation. Also acts as a key regulator of regulatory T-cells (Treg) differentiation. The sequence is that of Forkhead box protein O3 from Xenopus laevis (African clawed frog).